Here is a 355-residue protein sequence, read N- to C-terminus: NADH dehydrogenase-like protein YutJ (355 aa).

It belongs to the NADH dehydrogenase family. FAD serves as cofactor.

The sequence is that of NADH dehydrogenase-like protein YutJ (yutJ) from Bacillus subtilis (strain 168).